We begin with the raw amino-acid sequence, 269 residues long: Ribosomal RNA small subunit methyltransferase A (269 aa).

Positions 17, 42, 64, 89, and 109 each coordinate S-adenosyl-L-methionine.

This sequence belongs to the class I-like SAM-binding methyltransferase superfamily. rRNA adenine N(6)-methyltransferase family. RsmA subfamily.

It is found in the cytoplasm. The enzyme catalyses adenosine(1518)/adenosine(1519) in 16S rRNA + 4 S-adenosyl-L-methionine = N(6)-dimethyladenosine(1518)/N(6)-dimethyladenosine(1519) in 16S rRNA + 4 S-adenosyl-L-homocysteine + 4 H(+). Specifically dimethylates two adjacent adenosines (A1518 and A1519) in the loop of a conserved hairpin near the 3'-end of 16S rRNA in the 30S particle. May play a critical role in biogenesis of 30S subunits. This chain is Ribosomal RNA small subunit methyltransferase A, found in Anaplasma phagocytophilum (strain HZ).